A 240-amino-acid chain; its full sequence is Putative peptidoglycan hydrolase Rv2525c (240 aa).

The tat-type signal signal peptide spans Met-1 to Ala-33.

In terms of processing, predicted to be exported by the Tat system. The position of the signal peptide cleavage has not been experimentally proven.

It is found in the secreted. It catalyses the reaction Hydrolysis of (1-&gt;4)-beta-linkages between N-acetylmuramic acid and N-acetyl-D-glucosamine residues in a peptidoglycan and between N-acetyl-D-glucosamine residues in chitodextrins.. It functions in the pathway cell wall degradation; peptidoglycan degradation. In terms of biological role, may function as a peptidoglycan hydrolase with glycosidase activity. In vitro, displays esterase activity toward p-nitrophenyl esters of various acyl chain length (C4 to C16), with a preference for p-nitrophenyl butyrate (C4). The protein is Putative peptidoglycan hydrolase Rv2525c of Mycobacterium tuberculosis (strain ATCC 25618 / H37Rv).